The sequence spans 831 residues: Valine--tRNA ligase (831 aa).

The 'HIGH' region signature appears at 77 to 87 (PFTSGELHMGH). The short motif at 564–568 (RMSKS) is the 'KMSKS' region element. Lysine 567 serves as a coordination point for ATP.

It belongs to the class-I aminoacyl-tRNA synthetase family. ValS type 2 subfamily.

The protein resides in the cytoplasm. The enzyme catalyses tRNA(Val) + L-valine + ATP = L-valyl-tRNA(Val) + AMP + diphosphate. Catalyzes the attachment of valine to tRNA(Val). As ValRS can inadvertently accommodate and process structurally similar amino acids such as threonine, to avoid such errors, it has a 'posttransfer' editing activity that hydrolyzes mischarged Thr-tRNA(Val) in a tRNA-dependent manner. The polypeptide is Valine--tRNA ligase (Sulfolobus acidocaldarius (strain ATCC 33909 / DSM 639 / JCM 8929 / NBRC 15157 / NCIMB 11770)).